Here is a 351-residue protein sequence, read N- to C-terminus: Ferredoxin--NADP reductase (351 aa).

FAD contacts are provided by aspartate 44, glutamine 52, tyrosine 57, isoleucine 97, phenylalanine 132, aspartate 296, and serine 337.

It belongs to the ferredoxin--NADP reductase type 2 family. In terms of assembly, homodimer. It depends on FAD as a cofactor.

It carries out the reaction 2 reduced [2Fe-2S]-[ferredoxin] + NADP(+) + H(+) = 2 oxidized [2Fe-2S]-[ferredoxin] + NADPH. This chain is Ferredoxin--NADP reductase, found in Burkholderia vietnamiensis (strain G4 / LMG 22486) (Burkholderia cepacia (strain R1808)).